The following is a 226-amino-acid chain: Protein DVU_0532 (226 aa).

A run of 6 helical transmembrane segments spans residues 1–23 (MYAF…GLLA), 46–57 (AIGLQGAVQSAL), 73–99 (FFTV…NVIL), 112–131 (MGVA…MIAL), 141–164 (ILTT…GFLA), and 194–222 (LSHI…TRGP).

The cofactor is heme b.

The protein resides in the cell membrane. Its function is as follows. HMWC (high-molecular-weight cytochrome c), ORF2, ORF3, ORF4, ORF5 and ORF6 in the HMC operon form a transmembrane protein complex that allows electron flow from the periplasmic hydrogenase to the cytoplasmic enzymes that catalyze reduction of sulfates. This is Protein DVU_0532 from Nitratidesulfovibrio vulgaris (strain ATCC 29579 / DSM 644 / CCUG 34227 / NCIMB 8303 / VKM B-1760 / Hildenborough) (Desulfovibrio vulgaris).